The sequence spans 456 residues: Argininosuccinate lyase (456 aa).

The protein belongs to the lyase 1 family. Argininosuccinate lyase subfamily.

The protein localises to the cytoplasm. The catalysed reaction is 2-(N(omega)-L-arginino)succinate = fumarate + L-arginine. Its pathway is amino-acid biosynthesis; L-arginine biosynthesis; L-arginine from L-ornithine and carbamoyl phosphate: step 3/3. The polypeptide is Argininosuccinate lyase (Shewanella woodyi (strain ATCC 51908 / MS32)).